The following is a 336-amino-acid chain: UDP-N-acetylglucosamine--N-acetylmuramyl-(pentapeptide) pyrophosphoryl-undecaprenol N-acetylglucosamine transferase (336 aa).

The UDP-N-acetyl-alpha-D-glucosamine site is built by Asn102, Arg144, Ser172, and Gln264.

This sequence belongs to the glycosyltransferase 28 family. MurG subfamily.

Its subcellular location is the cell membrane. The catalysed reaction is di-trans,octa-cis-undecaprenyl diphospho-N-acetyl-alpha-D-muramoyl-L-alanyl-D-glutamyl-meso-2,6-diaminopimeloyl-D-alanyl-D-alanine + UDP-N-acetyl-alpha-D-glucosamine = di-trans,octa-cis-undecaprenyl diphospho-[N-acetyl-alpha-D-glucosaminyl-(1-&gt;4)]-N-acetyl-alpha-D-muramoyl-L-alanyl-D-glutamyl-meso-2,6-diaminopimeloyl-D-alanyl-D-alanine + UDP + H(+). The protein operates within cell wall biogenesis; peptidoglycan biosynthesis. Cell wall formation. Catalyzes the transfer of a GlcNAc subunit on undecaprenyl-pyrophosphoryl-MurNAc-pentapeptide (lipid intermediate I) to form undecaprenyl-pyrophosphoryl-MurNAc-(pentapeptide)GlcNAc (lipid intermediate II). The sequence is that of UDP-N-acetylglucosamine--N-acetylmuramyl-(pentapeptide) pyrophosphoryl-undecaprenol N-acetylglucosamine transferase from Rubrobacter xylanophilus (strain DSM 9941 / JCM 11954 / NBRC 16129 / PRD-1).